The following is a 457-amino-acid chain: UDP-N-acetylmuramate--L-alanine ligase (457 aa).

Residue 109–115 (GTDGKTT) coordinates ATP.

The protein belongs to the MurCDEF family.

Its subcellular location is the cytoplasm. The enzyme catalyses UDP-N-acetyl-alpha-D-muramate + L-alanine + ATP = UDP-N-acetyl-alpha-D-muramoyl-L-alanine + ADP + phosphate + H(+). The protein operates within cell wall biogenesis; peptidoglycan biosynthesis. Functionally, cell wall formation. This Thermotoga neapolitana (strain ATCC 49049 / DSM 4359 / NBRC 107923 / NS-E) protein is UDP-N-acetylmuramate--L-alanine ligase.